We begin with the raw amino-acid sequence, 343 residues long: MLVVQMPFSFPVAHFILFVFTVSTIFHIQQRLAKIQAMWELPEQIPVLASTSKALGPSQLRGIWTINAIGRLGNQMGEYATLYALAKMNGRPAFIPAQMHSTLAPIFRITLPVLHSTTASRIPWQNYHLNDWMEEKYRHIPGEYVRLTGYPCSWTFYHHLRHEILQEFTLHDHVREEAQKFLRGLQVNGSQPSTFVGVHVRRGDYVHVMPKVWKGVVADRRYLQQALDWFRARYSSPIFVVTSNGMAWCQENIDTSHSDVVFAGDGIEGSPAKDFALLTQCNHTIMTIGTFGIWAAYLAGGDTIYLANYTLPDSPFLKIFKPEAAFLPEWTGIAADLSPLLKH.

The Cytoplasmic portion of the chain corresponds to 1 to 14 (MLVVQMPFSFPVAH). A helical; Signal-anchor for type II membrane protein transmembrane segment spans residues 15–28 (FILFVFTVSTIFHI). Over 29-343 (QQRLAKIQAM…AADLSPLLKH (315 aa)) the chain is Lumenal. N-linked (GlcNAc...) asparagine glycans are attached at residues asparagine 188, asparagine 282, and asparagine 308.

This sequence belongs to the glycosyltransferase 11 family.

The protein resides in the golgi apparatus. It is found in the golgi stack membrane. It catalyses the reaction a beta-D-galactosyl-(1-&gt;3)-N-acetyl-beta-D-glucosaminyl derivative + GDP-beta-L-fucose = an alpha-L-Fuc-(1-&gt;2)-beta-D-Gal-(1-&gt;3)-beta-D-GlcNAc derivative + GDP + H(+). The catalysed reaction is a beta-D-galactosyl-(1-&gt;4)-N-acetyl-beta-D-glucosaminyl derivative + GDP-beta-L-fucose = an alpha-L-Fuc-(1-&gt;2)-beta-D-Gal-(1-&gt;4)-beta-D-GlcNAc derivative + GDP + H(+). The enzyme catalyses a neolactoside nLc4Cer + GDP-beta-L-fucose = a neolactoside IV(2)-alpha-Fuc-nLc4Cer + GDP + H(+). It carries out the reaction a neolactoside nLc4Cer(d18:1(4E)) + GDP-beta-L-fucose = a neolactoside IV(2)-alpha-Fuc-nLc4Cer(d18:1(4E)) + GDP + H(+). It catalyses the reaction a ganglioside GM1 + GDP-beta-L-fucose = a ganglioside Fuc-GM1 + GDP + H(+). The catalysed reaction is a ganglioside GA1 + GDP-beta-L-fucose = a ganglioside Fuc-GA1 + GDP + H(+). The enzyme catalyses Lc4Cer + GDP-beta-L-fucose = alpha-L-fucosyl-(1-&gt;2)-beta-D-galactosyl-(1-&gt;3)-N-acetyl-beta-D-glucosaminyl-(1-&gt;3)-beta-D-galactosyl-(1-&gt;4)-beta-D-glucosyl-(1&lt;-&gt;1')-ceramide + GDP + H(+). It carries out the reaction a beta-D-Gal-(1-&gt;3)-beta-D-GlcNAc-(1-&gt;3)-beta-D-Gal-(1-&gt;4)-beta-D-Glc-(1&lt;-&gt;1')-Cer(d18:1(4E)) + GDP-beta-L-fucose = alpha-L-fucosyl-(1-&gt;2)- beta-D-galactosyl-(1-&gt;3)-N-acetyl-beta-D-glucosaminyl-(1-&gt;3)-beta-D-galactosyl-(1-&gt;4)-beta-D-glucosyl-(1&lt;-&gt;1')-N-acylsphing-4-enine + GDP + H(+). It catalyses the reaction a ganglioside GD1b + GDP-beta-L-fucose = a ganglioside Fuc-GD1b + GDP + H(+). The catalysed reaction is a ganglioside GM1 (d18:1(4E)) + GDP-beta-L-fucose = a ganglioside Fuc-GM1 (d18:1(4E)) + GDP + H(+). The enzyme catalyses a globoside GalGb4Cer (d18:1(4E)) + GDP-beta-L-fucose = a globoside Globo-H (d18:1(4E)) + GDP + H(+). It carries out the reaction a lactoside III(4)-a-Fuc-Lc4Cer + GDP-beta-L-fucose = a lactoside IV(2),III(4)-a-[Fuc]2-Lc4Cer + GDP + H(+). It catalyses the reaction beta-D-galactosyl-(1-&gt;3)-N-acetyl-D-galactosamine + GDP-beta-L-fucose = alpha-L-fucosyl-(1-&gt;2)-beta-D-galactosyl-(1-&gt;3)-N-acetyl-D-galactosamine + GDP + H(+). The protein operates within protein modification; protein glycosylation. Its function is as follows. Catalyzes the transfer of L-fucose, from a guanosine diphosphate-beta-L-fucose, to the terminal galactose on both O- and N-linked glycans chains of cell surface glycoproteins and glycolipids and the resulting epitope regulates several processes such as cell-cell interaction including host-microbe interaction, cell surface expression and cell proliferation. Preferentially fucosylates gangliosides GA1 and GM1 in the antrum, cecum and colon and in the female reproductive organs. Fucosylated host glycoproteins or glycolipids mediate interaction with intestinal microbiota influencing its composition. Creates a soluble precursor oligosaccharide FuC-alpha ((1,2)Galbeta-) called the H antigen which is an essential substrate for the final step in the soluble ABO blood group antigen synthesis pathway. This is Galactoside alpha-(1,2)-fucosyltransferase 2 from Pongo pygmaeus (Bornean orangutan).